The sequence spans 1149 residues: Bone sialoprotein-binding protein (1149 aa).

Residues M1–A52 form the signal peptide. Positions A53 to K601 are ligand binding A region. Disordered stretches follow at residues E54–T249 and L675–K697. The span at A61 to V75 shows a compositional bias: basic and acidic residues. The span at E77 to T89 shows a compositional bias: polar residues. Positions I92–E106 are enriched in basic and acidic residues. The segment covering T109–T126 has biased composition (low complexity). The segment covering N130–T145 has biased composition (basic and acidic residues). Positions P158–D205 are enriched in polar residues. Basic and acidic residues predominate over residues S216–T241. 3 consecutive CNA-B domains span residues L602 to P714, K715 to P824, and K825 to T935. Residues T896–N1124 are disordered. Acidic residues-rich tracts occupy residues T903–E913 and Y930–S1088. The LPXTG sorting signal signature appears at L1112–G1116. Position 1115 is a pentaglycyl murein peptidoglycan amidated threonine (T1115). The propeptide at G1116–K1149 is removed by sortase.

Belongs to the serine-aspartate repeat-containing protein (SDr) family.

The protein localises to the secreted. It is found in the cell wall. In terms of biological role, specifically interacts with bone sialoprotein (BSP), a glycoprotein of bone and dentin extracellular matrix. Could contribute to staphylococcal osteomyelitis and arthritis. In Staphylococcus aureus, this protein is Bone sialoprotein-binding protein (bbp).